Consider the following 207-residue polypeptide: ATP-dependent Clp protease proteolytic subunit 2 (207 aa).

Ser102 (nucleophile) is an active-site residue. His127 is an active-site residue.

This sequence belongs to the peptidase S14 family. Fourteen ClpP subunits assemble into 2 heptameric rings which stack back to back to give a disk-like structure with a central cavity, resembling the structure of eukaryotic proteasomes.

It localises to the cytoplasm. It catalyses the reaction Hydrolysis of proteins to small peptides in the presence of ATP and magnesium. alpha-casein is the usual test substrate. In the absence of ATP, only oligopeptides shorter than five residues are hydrolyzed (such as succinyl-Leu-Tyr-|-NHMec, and Leu-Tyr-Leu-|-Tyr-Trp, in which cleavage of the -Tyr-|-Leu- and -Tyr-|-Trp bonds also occurs).. Its function is as follows. Cleaves peptides in various proteins in a process that requires ATP hydrolysis. Has a chymotrypsin-like activity. Plays a major role in the degradation of misfolded proteins. The polypeptide is ATP-dependent Clp protease proteolytic subunit 2 (Bifidobacterium longum (strain NCC 2705)).